The sequence spans 214 residues: MTISANKRSVMSLFSDKNDIYSHQVRIVLAEKGVPYELENINPNTISEDFLELNPYANIPTLVDRDLVLFNSRIIMEYLDERFPHPPLMPVYPVLRGKSRLTMHRIEQDWYSLIDIVNKNPESKEAKKALSQLREEMLALGSVFAATSYFMSDEFSLVDCYIAPLLWRMHNLGVQFTGAGGKAIKAYMTKVFQRDSFSQSIGGSAPKHLMDDKE.

Residues 9–87 (SVMSLFSDKN…YLDERFPHPP (79 aa)) form the GST N-terminal domain. The GST C-terminal domain occupies 92 to 209 (YPVLRGKSRL…SIGGSAPKHL (118 aa)).

The protein belongs to the GST superfamily. HSP26 family.

In terms of biological role, forms an equimolar complex with the RNA polymerase holoenzyme (RNAP) but not with the core enzyme. The chain is Stringent starvation protein A homolog (sspA) from Haemophilus ducreyi (strain 35000HP / ATCC 700724).